Consider the following 335-residue polypeptide: tRNA N6-adenosine threonylcarbamoyltransferase (335 aa).

Positions 110 and 114 each coordinate Fe cation. Substrate is bound by residues L132–G136, D165, G178, and N271. Position 299 (D299) interacts with Fe cation.

Belongs to the KAE1 / TsaD family. Fe(2+) serves as cofactor.

The protein resides in the cytoplasm. The enzyme catalyses L-threonylcarbamoyladenylate + adenosine(37) in tRNA = N(6)-L-threonylcarbamoyladenosine(37) in tRNA + AMP + H(+). In terms of biological role, required for the formation of a threonylcarbamoyl group on adenosine at position 37 (t(6)A37) in tRNAs that read codons beginning with adenine. Is involved in the transfer of the threonylcarbamoyl moiety of threonylcarbamoyl-AMP (TC-AMP) to the N6 group of A37, together with TsaE and TsaB. TsaD likely plays a direct catalytic role in this reaction. This Campylobacter jejuni subsp. jejuni serotype O:23/36 (strain 81-176) protein is tRNA N6-adenosine threonylcarbamoyltransferase.